Here is a 133-residue protein sequence, read N- to C-terminus: UPF0292 protein TGAM_1777 (133 aa).

Positions 20–100 (EGALIVEGLR…RVDVETRREL (81 aa)) constitute a Toprim domain. Residues Glu-26, Asp-69, and Asp-71 each coordinate Mg(2+).

It belongs to the UPF0292 family. Mg(2+) is required as a cofactor.

In Thermococcus gammatolerans (strain DSM 15229 / JCM 11827 / EJ3), this protein is UPF0292 protein TGAM_1777.